The following is a 337-amino-acid chain: Quinolinate synthase (337 aa).

Iminosuccinate contacts are provided by histidine 38 and serine 59. Residue cysteine 104 coordinates [4Fe-4S] cluster. Residues 130 to 132 (YAN) and serine 147 each bind iminosuccinate. Position 191 (cysteine 191) interacts with [4Fe-4S] cluster. Residues 217–219 (HPE) and threonine 234 each bind iminosuccinate. Cysteine 288 is a binding site for [4Fe-4S] cluster.

Belongs to the quinolinate synthase family. Type 1 subfamily. It depends on [4Fe-4S] cluster as a cofactor.

The protein localises to the cytoplasm. It catalyses the reaction iminosuccinate + dihydroxyacetone phosphate = quinolinate + phosphate + 2 H2O + H(+). It functions in the pathway cofactor biosynthesis; NAD(+) biosynthesis; quinolinate from iminoaspartate: step 1/1. Catalyzes the condensation of iminoaspartate with dihydroxyacetone phosphate to form quinolinate. The chain is Quinolinate synthase from Wigglesworthia glossinidia brevipalpis.